The chain runs to 108 residues: uncharacterized protein (108 aa).

A helical membrane pass occupies residues 25-45; it reads VILKSFLLISSWVILVLLLVI.

It is found in the membrane. This is an uncharacterized protein from Saccharomyces cerevisiae (strain ATCC 204508 / S288c) (Baker's yeast).